Here is a 959-residue protein sequence, read N- to C-terminus: DNA translocase FtsK 1 (959 aa).

The next 3 membrane-spanning stretches (helical) occupy residues 1-21 (MGLG…WRYV), 39-59 (IWLA…LTSG), and 83-103 (GWTG…PMVF). The Cytoplasmic segment spans residues 104–959 (GHSWRQLLAR…REVIAPGGGD (856 aa)). The interval 122 to 427 (PVQADARHDE…AAPPPPAVPA (306 aa)) is disordered. A compositionally biased stretch (basic and acidic residues) spans 126-136 (DARHDEADDGL). Low complexity-rich tracts occupy residues 220-229 (ATPKAATQAP) and 264-286 (APSA…DAPA). Pro residues predominate over residues 287 to 298 (SAPPEPAEPSPP). Acidic residues predominate over residues 333–379 (PEPEPEPEAETEVTPEAEAEPEAEPEAEAEPEAEAEAEAEAEAEPEA). The span at 380–403 (EAPAPESVAPALQEAEAATAAEAP) shows a compositional bias: low complexity. One can recognise a FtsK domain in the interval 605–814 (GNPVVTDLAR…FQVSSKIDSR (210 aa)). Position 625 to 630 (625 to 630 (GSGKSV)) interacts with ATP.

This sequence belongs to the FtsK/SpoIIIE/SftA family. As to quaternary structure, homohexamer. Forms a ring that surrounds DNA.

It localises to the cell inner membrane. Essential cell division protein that coordinates cell division and chromosome segregation. The N-terminus is involved in assembly of the cell-division machinery. The C-terminus functions as a DNA motor that moves dsDNA in an ATP-dependent manner towards the dif recombination site, which is located within the replication terminus region. Translocation stops specifically at Xer-dif sites, where FtsK interacts with the Xer recombinase, allowing activation of chromosome unlinking by recombination. FtsK orienting polar sequences (KOPS) guide the direction of DNA translocation. FtsK can remove proteins from DNA as it translocates, but translocation stops specifically at XerCD-dif site, thereby preventing removal of XerC and XerD from dif. This Ralstonia nicotianae (strain ATCC BAA-1114 / GMI1000) (Ralstonia solanacearum) protein is DNA translocase FtsK 1 (ftsK1).